We begin with the raw amino-acid sequence, 157 residues long: uncharacterized protein (157 aa).

A signal peptide spans 1–30 (MLPEQGPQPSTMPLWCLLAACTSLPRQAAT).

It is found in the secreted. This is an uncharacterized protein from Homo sapiens (Human).